A 332-amino-acid chain; its full sequence is D-amino acid oxidase (332 aa).

The FAD site is built by A8, G9, I10, T39, T40, A45, G46, L47, V161, and S180. Y218 and R274 together coordinate D-proline. Residues Y218 and R274 each coordinate D-serine. Positions 274, 305, 306, 308, and 310 each coordinate FAD. D-proline is bound at residue G306. Residue G306 coordinates D-serine. Residues 330-332 (AKL) carry the Microbody targeting signal motif.

This sequence belongs to the DAMOX/DASOX family. Requires FAD as cofactor.

The protein resides in the peroxisome matrix. The enzyme catalyses a D-alpha-amino acid + O2 + H2O = a 2-oxocarboxylate + H2O2 + NH4(+). The catalysed reaction is D-alanine + O2 + H2O = pyruvate + H2O2 + NH4(+). It carries out the reaction D-arginine + O2 + H2O = 5-guanidino-2-oxopentanoate + H2O2 + NH4(+). It catalyses the reaction D-asparagine + O2 + H2O = 2-oxosuccinamate + H2O2 + NH4(+). The enzyme catalyses D-cysteine + O2 + H2O = 2-oxo-3-sulfanylpropanoate + H2O2 + NH4(+). The catalysed reaction is D-glutamine + O2 + H2O = 2-oxoglutaramate + H2O2 + NH4(+). It carries out the reaction D-isoleucine + O2 + H2O = (R)-3-methyl-2-oxopentanoate + H2O2 + NH4(+). It catalyses the reaction D-leucine + O2 + H2O = 4-methyl-2-oxopentanoate + H2O2 + NH4(+). The enzyme catalyses D-lysine + O2 + H2O = 6-amino-2-oxohexanoate + H2O2 + NH4(+). The catalysed reaction is D-methionine + O2 + H2O = 4-methylsulfanyl-2-oxobutanoate + H2O2 + NH4(+). It carries out the reaction D-phenylalanine + O2 + H2O = 3-phenylpyruvate + H2O2 + NH4(+). It catalyses the reaction D-proline + O2 = 1-pyrroline-2-carboxylate + H2O2. The enzyme catalyses D-valine + O2 + H2O = 3-methyl-2-oxobutanoate + H2O2 + NH4(+). The catalysed reaction is D-histidine + O2 + H2O = 3-(imidazol-5-yl)pyruvate + H2O2 + NH4(+). It carries out the reaction D-tyrosine + O2 + H2O = 3-(4-hydroxyphenyl)pyruvate + H2O2 + NH4(+). It catalyses the reaction D-serine + O2 + H2O = 3-hydroxypyruvate + H2O2 + NH4(+). The enzyme catalyses D-threonine + O2 + H2O = (S)-3-hydroxy-2-oxobutanoate + H2O2 + NH4(+). The catalysed reaction is D-tryptophan + O2 + H2O = indole-3-pyruvate + H2O2 + NH4(+). In terms of biological role, catalyzes the oxidative deamination of D-amino acids with broad substrate specificity. Could be responsible for the degradation of diet-derived D-alanine in the intestine. Maintains the asexual state of worms and represses early ovarian development. Following sexual induction, the enzyme is required for differentiation of oogonia into oocytes in the developing ovaries. This chain is D-amino acid oxidase, found in Dugesia ryukyuensis (Freshwater planarian flatworm).